We begin with the raw amino-acid sequence, 356 residues long: Protein-glutamate methylesterase/protein-glutamine glutaminase 2 (356 aa).

A Response regulatory domain is found at lysine 6–arginine 123. Aspartate 57 bears the 4-aspartylphosphate mark. Positions valine 165 to serine 356 constitute a CheB-type methylesterase domain. Catalysis depends on residues serine 177, histidine 203, and aspartate 299.

This sequence belongs to the CheB family. Post-translationally, phosphorylated by CheA. Phosphorylation of the N-terminal regulatory domain activates the methylesterase activity.

It is found in the cytoplasm. The catalysed reaction is [protein]-L-glutamate 5-O-methyl ester + H2O = L-glutamyl-[protein] + methanol + H(+). It carries out the reaction L-glutaminyl-[protein] + H2O = L-glutamyl-[protein] + NH4(+). Functionally, involved in chemotaxis. Part of a chemotaxis signal transduction system that modulates chemotaxis in response to various stimuli. Catalyzes the demethylation of specific methylglutamate residues introduced into the chemoreceptors (methyl-accepting chemotaxis proteins or MCP) by CheR. Also mediates the irreversible deamidation of specific glutamine residues to glutamic acid. This Oleidesulfovibrio alaskensis (strain ATCC BAA-1058 / DSM 17464 / G20) (Desulfovibrio alaskensis) protein is Protein-glutamate methylesterase/protein-glutamine glutaminase 2.